The primary structure comprises 172 residues: MERAEKREFVASLNQVFQNTGSVVVATYAGLTVAQMNDLRSKMRAAGGSVKVAKNRLAKIALQGTPSEGIQALFQGQTLIAYSDDPVAAPKIASEFAKGNDNLVILGGAMGATALDAEGVKALASLPSLDELRAKIVGMIQTPATRIAQIVNAPAGQLARVVGAYARKDEAA.

The protein belongs to the universal ribosomal protein uL10 family. As to quaternary structure, part of the ribosomal stalk of the 50S ribosomal subunit. The N-terminus interacts with L11 and the large rRNA to form the base of the stalk. The C-terminus forms an elongated spine to which L12 dimers bind in a sequential fashion forming a multimeric L10(L12)X complex.

Its function is as follows. Forms part of the ribosomal stalk, playing a central role in the interaction of the ribosome with GTP-bound translation factors. The chain is Large ribosomal subunit protein uL10 from Chelativorans sp. (strain BNC1).